A 307-amino-acid chain; its full sequence is Cilia-and flagella-associated protein 96 (307 aa).

Disordered stretches follow at residues 73–102 and 218–279; these read YSDPFKQRRQHRMQQSKKNLGKPFLPSSGE and HSQK…GPKT.

The protein belongs to the CFAP96 family.

The protein localises to the cytoplasm. The protein resides in the cytoskeleton. It localises to the microtubule organizing center. Its subcellular location is the centrosome. The polypeptide is Cilia-and flagella-associated protein 96 (cfap96.L) (Xenopus laevis (African clawed frog)).